Consider the following 698-residue polypeptide: Effector protein AvrPphDPgy (698 aa).

The segment covering Met1–Pro15 has biased composition (polar residues). Disordered regions lie at residues Met1 to Arg36 and Val171 to Ser200. Over residues Asp172 to Pro181 the composition is skewed to low complexity.

It is found in the secreted. In terms of biological role, effector protein involved in non-host recognition. This chain is Effector protein AvrPphDPgy (avrPphDPgy), found in Pseudomonas savastanoi pv. glycinea (Pseudomonas syringae pv. glycinea).